We begin with the raw amino-acid sequence, 206 residues long: Thiamine-phosphate synthase (206 aa).

4-amino-2-methyl-5-(diphosphooxymethyl)pyrimidine is bound by residues 36-40 (QLRAK) and asparagine 68. Mg(2+) is bound by residues aspartate 69 and aspartate 88. Residue serine 105 coordinates 4-amino-2-methyl-5-(diphosphooxymethyl)pyrimidine. Residue 131 to 133 (TPT) participates in 2-[(2R,5Z)-2-carboxy-4-methylthiazol-5(2H)-ylidene]ethyl phosphate binding. Lysine 134 is a binding site for 4-amino-2-methyl-5-(diphosphooxymethyl)pyrimidine. Glycine 162 contributes to the 2-[(2R,5Z)-2-carboxy-4-methylthiazol-5(2H)-ylidene]ethyl phosphate binding site.

Belongs to the thiamine-phosphate synthase family. Requires Mg(2+) as cofactor.

It carries out the reaction 2-[(2R,5Z)-2-carboxy-4-methylthiazol-5(2H)-ylidene]ethyl phosphate + 4-amino-2-methyl-5-(diphosphooxymethyl)pyrimidine + 2 H(+) = thiamine phosphate + CO2 + diphosphate. It catalyses the reaction 2-(2-carboxy-4-methylthiazol-5-yl)ethyl phosphate + 4-amino-2-methyl-5-(diphosphooxymethyl)pyrimidine + 2 H(+) = thiamine phosphate + CO2 + diphosphate. The catalysed reaction is 4-methyl-5-(2-phosphooxyethyl)-thiazole + 4-amino-2-methyl-5-(diphosphooxymethyl)pyrimidine + H(+) = thiamine phosphate + diphosphate. Its pathway is cofactor biosynthesis; thiamine diphosphate biosynthesis; thiamine phosphate from 4-amino-2-methyl-5-diphosphomethylpyrimidine and 4-methyl-5-(2-phosphoethyl)-thiazole: step 1/1. Its function is as follows. Condenses 4-methyl-5-(beta-hydroxyethyl)thiazole monophosphate (THZ-P) and 2-methyl-4-amino-5-hydroxymethyl pyrimidine pyrophosphate (HMP-PP) to form thiamine monophosphate (TMP). The protein is Thiamine-phosphate synthase of Thermus thermophilus (strain ATCC BAA-163 / DSM 7039 / HB27).